The primary structure comprises 3084 residues: Protein prune homolog 2 (3084 aa).

At Met-1 the chain carries N-acetylmethionine. The DHH motif motif lies at 109–111; the sequence is GSH. 18 disordered regions span residues 394–417, 430–465, 500–536, 672–733, 811–837, 861–907, 947–1080, 1224–1316, 1338–1395, 1502–1543, 1600–1652, 1776–1799, 1836–1886, 1961–1980, 2071–2196, 2410–2782, 2797–2816, and 2825–2859; these read QPSSVNFIENPPELNDSNQAQADG, TIRSSRSSKESSVFLSDDSPVGDGGAPHHSLLPGFD, ASEQSQPSSHSADYSPEDDFPNSDSSEGNLSAGPKGL, EQES…QKEE, KNTWNLHPTNNETPSGQEPSEWAMGQS, EIWG…KATG, SASN…DDPS, NMPS…GQSE, SGVN…LEVE, MNST…DLHD, GFGK…TTKR, ETGTMDTTWHGSASTEAKNGDPDK, GELE…GDKS, DENGCVSTGVSPTECQQENQ, ILTH…NPEV, MLLS…SHPR, QSEGSILSDDNLDSPDEIDI, and DEADSFEYTNHEDPTANKSSGQESESIPEYTAEEE. Polar residues predominate over residues 501-511; it reads SEQSQPSSHSA. Composition is skewed to basic and acidic residues over residues 682–696 and 723–733; these read PWKDPKPEPVERRTS and GNKEAQDQKEE. Polar residues-rich tracts occupy residues 811 to 828 and 865 to 891; these read KNTWNLHPTNNETPSGQE and KNNSSKDTSLTSGSPTSDLGQTWNNSK. Positions 962 to 975 are enriched in low complexity; the sequence is TNYSTSDSYTSPTY. Residues 977–999 are compositionally biased toward basic and acidic residues; that stretch reads GDEKEIANKPVDKDNGFEAKDAE. Residues 1009-1019 are compositionally biased toward polar residues; it reads ATSSQQSQRNR. Basic and acidic residues predominate over residues 1034-1063; that stretch reads HTEDKPEGNDAHHPDSDALKTEHAEDKNAS. Positions 1071–1080 are enriched in low complexity; that stretch reads SSPSSYDDPS. The span at 1248–1261 shows a compositional bias: basic and acidic residues; that stretch reads SPRHSNGKDSHMLE. Residues 1265–1294 are compositionally biased toward polar residues; the sequence is LSESGGLTSQPVNQDTWGDSQGDTASSVTG. The segment covering 1350–1366 has biased composition (basic and acidic residues); the sequence is KPRDQEFSSSDAFEHQD. The segment covering 1368–1378 has biased composition (low complexity); that stretch reads SSASGKISSLS. 3 stretches are compositionally biased toward polar residues: residues 1779–1792, 1854–1869, and 1965–1980; these read TMDTTWHGSASTEA, PIQNDSEPVDTGSTNP, and CVSTGVSPTECQQENQ. A compositionally biased stretch (basic and acidic residues) spans 2089–2103; sequence VCHDSEGEQKMEKHT. The span at 2162-2174 shows a compositional bias: low complexity; sequence SSKPASSRSSPEP. Composition is skewed to basic and acidic residues over residues 2416–2428, 2506–2525, and 2535–2553; these read PDHREEDKAETNI, KQTELEYKEEKQPEQSEDHQ, and SHEKDSPLKPEAREARENI. A compositionally biased stretch (polar residues) spans 2569-2584; the sequence is PETQLSGTPDTCQSEF. Positions 2595–2606 are enriched in low complexity; sequence RMSSSSNHESAS. Over residues 2607 to 2617 the composition is skewed to polar residues; sequence LENPAQDQSWM. Positions 2653 to 2664 are enriched in basic and acidic residues; that stretch reads KGPKSQVLERNK. Over residues 2806–2816 the composition is skewed to acidic residues; that stretch reads DNLDSPDEIDI. Residues 2840-2849 are compositionally biased toward polar residues; it reads ANKSSGQESE. The region spanning 2879 to 3040 is the CRAL-TRIO domain; it reads DMKVIEPYRR…SIIKYDEEKS (162 aa).

It belongs to the PPase class C family. Prune subfamily.

It localises to the cytoplasm. Its function is as follows. May play an important role in regulating differentiation, survival and aggressiveness of the tumor cells. The chain is Protein prune homolog 2 (Prune2) from Mus musculus (Mouse).